We begin with the raw amino-acid sequence, 199 residues long: Recombination protein RecR (199 aa).

The segment at Cys57 to Cys72 adopts a C4-type zinc-finger fold. The region spanning Ala80–Pro175 is the Toprim domain.

The protein belongs to the RecR family.

Its function is as follows. May play a role in DNA repair. It seems to be involved in an RecBC-independent recombinational process of DNA repair. It may act with RecF and RecO. In Nitrosospira multiformis (strain ATCC 25196 / NCIMB 11849 / C 71), this protein is Recombination protein RecR.